A 107-amino-acid polypeptide reads, in one-letter code: Large ribosomal subunit protein bL21 (107 aa).

Belongs to the bacterial ribosomal protein bL21 family. As to quaternary structure, part of the 50S ribosomal subunit. Contacts protein L20.

This protein binds to 23S rRNA in the presence of protein L20. The protein is Large ribosomal subunit protein bL21 of Pseudothermotoga lettingae (strain ATCC BAA-301 / DSM 14385 / NBRC 107922 / TMO) (Thermotoga lettingae).